A 418-amino-acid chain; its full sequence is NADH-quinone oxidoreductase subunit D (418 aa).

This sequence belongs to the complex I 49 kDa subunit family. NDH-1 is composed of 14 different subunits. Subunits NuoB, C, D, E, F, and G constitute the peripheral sector of the complex.

The protein localises to the cell inner membrane. The enzyme catalyses a quinone + NADH + 5 H(+)(in) = a quinol + NAD(+) + 4 H(+)(out). In terms of biological role, NDH-1 shuttles electrons from NADH, via FMN and iron-sulfur (Fe-S) centers, to quinones in the respiratory chain. The immediate electron acceptor for the enzyme in this species is believed to be ubiquinone. Couples the redox reaction to proton translocation (for every two electrons transferred, four hydrogen ions are translocated across the cytoplasmic membrane), and thus conserves the redox energy in a proton gradient. The protein is NADH-quinone oxidoreductase subunit D of Bordetella bronchiseptica (strain ATCC BAA-588 / NCTC 13252 / RB50) (Alcaligenes bronchisepticus).